Consider the following 92-residue polypeptide: Ictacalcin (92 aa).

2 EF-hand domains span residues 12–47 and 49–84; these read ISTF…AFGN and SDQA…TTML. Ca(2+) contacts are provided by Thr-27, Glu-32, Asp-62, Asn-64, Asp-66, and Glu-73.

The protein belongs to the S-100 family. In terms of tissue distribution, abundant in epithelial cells of olfactory rosette, barbel, skin and gill but not brain or muscle.

Plays an important role in catfish calcium homeostasis. This is Ictacalcin from Ictalurus punctatus (Channel catfish).